The chain runs to 140 residues: Putative nickel-responsive regulator (140 aa).

Ni(2+)-binding residues include His81, His92, His94, and Cys100.

It belongs to the transcriptional regulatory CopG/NikR family. It depends on Ni(2+) as a cofactor.

Transcriptional regulator. This Methanocella arvoryzae (strain DSM 22066 / NBRC 105507 / MRE50) protein is Putative nickel-responsive regulator.